We begin with the raw amino-acid sequence, 456 residues long: FAD-dependent monooxygenase sor5 (456 aa).

The chain crosses the membrane as a helical span at residues Pro-18–Leu-38. An N-linked (GlcNAc...) asparagine glycan is attached at Asn-43. FAD is bound by residues Glu-48 and Arg-119. Arg-200 is an active-site residue. FAD contacts are provided by Asp-331 and Ala-344.

This sequence belongs to the paxM FAD-dependent monooxygenase family. It depends on FAD as a cofactor.

The protein localises to the membrane. It participates in secondary metabolite biosynthesis. In terms of biological role, FAD-dependent monooxygenase; part of the SOR gene cluster that mediates the biosynthesis of sorbicillinoids, a diverse group of yellow secondary metabolites that restrict growth of competing pathogenic fungi but not of bacteria. Sorbicillinoids biosynthesis requires the action of two PKSs. The SOR cluster is required for the production of trichodimerol and dihydrotrichotetronin, with sor2 being sufficient for production of trichodimerol, but not dihydrotrichotetronin in the light. Sor1 iteratively combines three acetyl units and the growing chain is modified by the ketoacyl reductase subunit, and optional by the enoyl reductase subunit in the second cycle. The polyketide is then handed over to the PKS sor2, which adds three more acetyl units, and two methyl groups. Sor2 releases an aldehyde, which undergoes spontaneous cyclization resulting in the formation of sorbicillin or 2',3'-dihydrosorbicillin. The monooxygenase sor5 oxidizes sorbicillin and 2',3'-dihydrosorbicillin to 2',3'-dihydrosorbicillinol and sorbicillinol, respectively. The oxidoreductase sor8 further converts sorbicillinol into oxosorbicillinol. Sorbicillinol is the building block for the other sorbicillinoids such as disorbicillinol, bisvertinolon, dihydrobisvertinolone, and dihydrotrichotetronine. The chain is FAD-dependent monooxygenase sor5 from Hypocrea jecorina (strain QM6a) (Trichoderma reesei).